A 231-amino-acid chain; its full sequence is LexA repressor (231 aa).

The H-T-H motif DNA-binding region spans 26-46; the sequence is FDEMKDALDLRSKSGIHRLIT. Active-site for autocatalytic cleavage activity residues include S152 and K190.

The protein belongs to the peptidase S24 family. Homodimer.

It carries out the reaction Hydrolysis of Ala-|-Gly bond in repressor LexA.. Its function is as follows. Represses a number of genes involved in the response to DNA damage (SOS response), including recA and lexA. In the presence of single-stranded DNA, RecA interacts with LexA causing an autocatalytic cleavage which disrupts the DNA-binding part of LexA, leading to derepression of the SOS regulon and eventually DNA repair. The protein is LexA repressor of Bradyrhizobium diazoefficiens (strain JCM 10833 / BCRC 13528 / IAM 13628 / NBRC 14792 / USDA 110).